A 933-amino-acid chain; its full sequence is Exosome complex exonuclease RRP44 homolog A (933 aa).

The region spanning 50–163 (KIIVVDTNVV…LVTNDRENKR (114 aa)) is the PINc domain. In terms of domain architecture, CSD1 spans 217-321 (QEHKPMSEIT…NVDDAPRTSN (105 aa)). Residues 296 to 336 (AEEDDEEDDTVHLAPDNVDDAPRTSNLSHETSGDKNAAPVR) are disordered. The region spanning 371 to 438 (ALFVSKDRRI…ETEVVLIEND (68 aa)) is the CSD2 domain. The region spanning 469 to 798 (RQDLRHLLVF…FVHRLLAASL (330 aa)) is the RNB domain. 2 residues coordinate Mg(2+): Asp-481 and Asp-490.

Belongs to the RNR ribonuclease family. Probable component of the RNA exosome complex. The cofactor is Mg(2+).

Its subcellular location is the nucleus. Catalytic component of the RNA exosome complex which has 3'-&gt;5' exoribonuclease activity and participates in a multitude of cellular RNA processing and degradation events. Required for 5.8S rRNA intermediate processing and the degradation of 5' external transcribed spacer (5' ETS), a maturation by-product of rRNA synthesis. Is not involved in the degradation of turnip crinkle virus (TCV) RNA and significant virus resistance. Required for normal development of female gametophytes and early embryogenesis. The chain is Exosome complex exonuclease RRP44 homolog A from Arabidopsis thaliana (Mouse-ear cress).